A 100-amino-acid polypeptide reads, in one-letter code: Large ribosomal subunit protein bL27 (100 aa).

Residues 1-9 constitute a propeptide that is removed on maturation; sequence MLSINLSLC.

It belongs to the bacterial ribosomal protein bL27 family. Post-translationally, the N-terminus is cleaved by ribosomal processing cysteine protease Prp.

The sequence is that of Large ribosomal subunit protein bL27 from Clostridium acetobutylicum (strain ATCC 824 / DSM 792 / JCM 1419 / IAM 19013 / LMG 5710 / NBRC 13948 / NRRL B-527 / VKM B-1787 / 2291 / W).